We begin with the raw amino-acid sequence, 1052 residues long: Protein argonaute 14 (1052 aa).

Residues 1 to 39 (MASRGGDGLVGGGRGPLGGRDGRGRGPAGGRGGGRGGGH) show a composition bias toward gly residues. 2 disordered regions span residues 1-127 (MASR…TPAV) and 170-194 (GGRP…APPS). The span at 40 to 49 (PQQQQQQQPG) shows a compositional bias: low complexity. Composition is skewed to gly residues over residues 50-59 (YGRGDGGGRG) and 66-81 (GVVG…GGRG). Residues 97–117 (VRPAMAAAPAASTPGPVAVAA) show a composition bias toward low complexity. Residues 173 to 183 (PAPPAAPPAPI) are compositionally biased toward pro residues. A PAZ domain is found at 394–510 (SVVEYVKNCL…LPMEVCTIVE (117 aa)). One can recognise a Piwi domain in the interval 677–1009 (LLIVILPDVN…AAFRARYYDE (333 aa)).

It belongs to the argonaute family. Ago subfamily. As to expression, expressed in seeds.

Functionally, probably involved in the RNA silencing pathway. May bind to short RNAs such as microRNAs (miRNAs) or short interfering RNAs (siRNAs), and represses the translation of mRNAs which are complementary to them. This Oryza sativa subsp. japonica (Rice) protein is Protein argonaute 14 (AGO14).